A 229-amino-acid chain; its full sequence is ATP synthase subunit a (229 aa).

Helical transmembrane passes span 25–45 (VHII…VLGA), 58–75 (FLEV…SVTG), 81–101 (FFPL…IGLV), 110–130 (SINT…FIGI), 141–161 (FLGP…IGHL), 175–195 (MMGH…FFAP), and 196–216 (LPIM…FFLL).

The protein belongs to the ATPase A chain family. In terms of assembly, F-type ATPases have 2 components, CF(1) - the catalytic core - and CF(0) - the membrane proton channel. CF(1) has five subunits: alpha(3), beta(3), gamma(1), delta(1), epsilon(1). CF(0) has three main subunits: a(1), b(2) and c(9-12). The alpha and beta chains form an alternating ring which encloses part of the gamma chain. CF(1) is attached to CF(0) by a central stalk formed by the gamma and epsilon chains, while a peripheral stalk is formed by the delta and b chains.

The protein localises to the cell inner membrane. Functionally, key component of the proton channel; it plays a direct role in the translocation of protons across the membrane. This is ATP synthase subunit a from Desulfosudis oleivorans (strain DSM 6200 / JCM 39069 / Hxd3) (Desulfococcus oleovorans).